We begin with the raw amino-acid sequence, 321 residues long: Lipoyl synthase (321 aa).

The [4Fe-4S] cluster site is built by Cys-68, Cys-73, Cys-79, Cys-94, Cys-98, Cys-101, and Ser-308. The Radical SAM core domain maps to 80–297 (FNHGTATFMI…KAEAMAMGFT (218 aa)).

Belongs to the radical SAM superfamily. Lipoyl synthase family. [4Fe-4S] cluster serves as cofactor.

It localises to the cytoplasm. The catalysed reaction is [[Fe-S] cluster scaffold protein carrying a second [4Fe-4S](2+) cluster] + N(6)-octanoyl-L-lysyl-[protein] + 2 oxidized [2Fe-2S]-[ferredoxin] + 2 S-adenosyl-L-methionine + 4 H(+) = [[Fe-S] cluster scaffold protein] + N(6)-[(R)-dihydrolipoyl]-L-lysyl-[protein] + 4 Fe(3+) + 2 hydrogen sulfide + 2 5'-deoxyadenosine + 2 L-methionine + 2 reduced [2Fe-2S]-[ferredoxin]. Its pathway is protein modification; protein lipoylation via endogenous pathway; protein N(6)-(lipoyl)lysine from octanoyl-[acyl-carrier-protein]: step 2/2. In terms of biological role, catalyzes the radical-mediated insertion of two sulfur atoms into the C-6 and C-8 positions of the octanoyl moiety bound to the lipoyl domains of lipoate-dependent enzymes, thereby converting the octanoylated domains into lipoylated derivatives. The sequence is that of Lipoyl synthase from Yersinia enterocolitica serotype O:8 / biotype 1B (strain NCTC 13174 / 8081).